The primary structure comprises 279 residues: Putative pyruvate, phosphate dikinase regulatory protein (279 aa).

153–160 (GISRTSKT) lines the ADP pocket.

The protein belongs to the pyruvate, phosphate/water dikinase regulatory protein family. PDRP subfamily.

The enzyme catalyses N(tele)-phospho-L-histidyl/L-threonyl-[pyruvate, phosphate dikinase] + ADP = N(tele)-phospho-L-histidyl/O-phospho-L-threonyl-[pyruvate, phosphate dikinase] + AMP + H(+). It carries out the reaction N(tele)-phospho-L-histidyl/O-phospho-L-threonyl-[pyruvate, phosphate dikinase] + phosphate + H(+) = N(tele)-phospho-L-histidyl/L-threonyl-[pyruvate, phosphate dikinase] + diphosphate. Its function is as follows. Bifunctional serine/threonine kinase and phosphorylase involved in the regulation of the pyruvate, phosphate dikinase (PPDK) by catalyzing its phosphorylation/dephosphorylation. The polypeptide is Putative pyruvate, phosphate dikinase regulatory protein (Brucella melitensis biotype 2 (strain ATCC 23457)).